Reading from the N-terminus, the 284-residue chain is 2-dehydro-3-deoxyphosphooctonate aldolase (284 aa).

It belongs to the KdsA family.

The protein localises to the cytoplasm. The enzyme catalyses D-arabinose 5-phosphate + phosphoenolpyruvate + H2O = 3-deoxy-alpha-D-manno-2-octulosonate-8-phosphate + phosphate. Its pathway is carbohydrate biosynthesis; 3-deoxy-D-manno-octulosonate biosynthesis; 3-deoxy-D-manno-octulosonate from D-ribulose 5-phosphate: step 2/3. It participates in bacterial outer membrane biogenesis; lipopolysaccharide biosynthesis. The sequence is that of 2-dehydro-3-deoxyphosphooctonate aldolase from Citrobacter koseri (strain ATCC BAA-895 / CDC 4225-83 / SGSC4696).